The primary structure comprises 389 residues: Phosphoglycerate kinase (389 aa).

Substrate-binding positions include 21–23 (DLN), R36, 59–62 (HLGR), R112, and R145. ATP contacts are provided by residues K196, E318, and 344-347 (GGDS).

It belongs to the phosphoglycerate kinase family. In terms of assembly, monomer.

Its subcellular location is the cytoplasm. The enzyme catalyses (2R)-3-phosphoglycerate + ATP = (2R)-3-phospho-glyceroyl phosphate + ADP. It functions in the pathway carbohydrate degradation; glycolysis; pyruvate from D-glyceraldehyde 3-phosphate: step 2/5. This chain is Phosphoglycerate kinase, found in Desulfovibrio desulfuricans (strain ATCC 27774 / DSM 6949 / MB).